The following is a 108-amino-acid chain: Signal recognition particle 19 kDa protein (108 aa).

It belongs to the SRP19 family. In terms of assembly, part of the signal recognition particle protein translocation system, which is composed of SRP and FtsY. Archaeal SRP consists of a 7S RNA molecule of 300 nucleotides and two protein subunits: SRP54 and SRP19.

It is found in the cytoplasm. Its function is as follows. Involved in targeting and insertion of nascent membrane proteins into the cytoplasmic membrane. Binds directly to 7S RNA and mediates binding of the 54 kDa subunit of the SRP. The sequence is that of Signal recognition particle 19 kDa protein from Thermococcus kodakarensis (strain ATCC BAA-918 / JCM 12380 / KOD1) (Pyrococcus kodakaraensis (strain KOD1)).